A 111-amino-acid chain; its full sequence is DNA-directed RNA polymerase subunit Rpo11 (111 aa).

It belongs to the archaeal Rpo11/eukaryotic RPB11/RPC19 RNA polymerase subunit family. In terms of assembly, part of the RNA polymerase complex.

The protein localises to the cytoplasm. It carries out the reaction RNA(n) + a ribonucleoside 5'-triphosphate = RNA(n+1) + diphosphate. DNA-dependent RNA polymerase (RNAP) catalyzes the transcription of DNA into RNA using the four ribonucleoside triphosphates as substrates. This Thermoplasma volcanium (strain ATCC 51530 / DSM 4299 / JCM 9571 / NBRC 15438 / GSS1) protein is DNA-directed RNA polymerase subunit Rpo11.